The following is a 307-amino-acid chain: Transaldolase (307 aa).

Catalysis depends on Lys-125, which acts as the Schiff-base intermediate with substrate.

Belongs to the transaldolase family. Type 1 subfamily. As to quaternary structure, homodimer.

The protein localises to the cytoplasm. It catalyses the reaction D-sedoheptulose 7-phosphate + D-glyceraldehyde 3-phosphate = D-erythrose 4-phosphate + beta-D-fructose 6-phosphate. Its pathway is carbohydrate degradation; pentose phosphate pathway; D-glyceraldehyde 3-phosphate and beta-D-fructose 6-phosphate from D-ribose 5-phosphate and D-xylulose 5-phosphate (non-oxidative stage): step 2/3. Its function is as follows. Transaldolase is important for the balance of metabolites in the pentose-phosphate pathway. The polypeptide is Transaldolase (Pseudomonas aeruginosa (strain LESB58)).